The sequence spans 622 residues: Probable potassium transport system protein Kup 2 (622 aa).

Transmembrane regions (helical) follow at residues 9-29 (LSGV…TSPL), 46-66 (PASI…VVSV), 99-119 (TPLL…EVVI), 137-157 (PSLD…LFAI), 169-189 (FAPI…NSIF), 213-233 (ASFF…ALYA), 247-267 (WFMV…ALLL), 285-305 (ALLP…QAVI), 337-357 (IYIP…IMSF), 363-383 (LAAA…ILSC), 396-416 (LVAA…AANL), and 419-439 (IFSG…VMTS).

The protein belongs to the HAK/KUP transporter (TC 2.A.72) family.

The protein resides in the cell inner membrane. It catalyses the reaction K(+)(in) + H(+)(in) = K(+)(out) + H(+)(out). Transport of potassium into the cell. Likely operates as a K(+):H(+) symporter. The sequence is that of Probable potassium transport system protein Kup 2 from Aeromonas hydrophila subsp. hydrophila (strain ATCC 7966 / DSM 30187 / BCRC 13018 / CCUG 14551 / JCM 1027 / KCTC 2358 / NCIMB 9240 / NCTC 8049).